The following is a 294-amino-acid chain: Glycine N-acyltransferase-like protein 2 (294 aa).

N6-acetyllysine is present on Lys19.

This sequence belongs to the glycine N-acyltransferase family. Acetylation at Lys-19 drastically decreases the production of N-oleoyl and N-arachidonoyl glycines. In terms of tissue distribution, expressed at highest levels in salivary gland and trachea. Also detected in thyroid gland, spinal cord, prostate, lung and fetal brain.

Its subcellular location is the endoplasmic reticulum. It catalyses the reaction an acyl-CoA + glycine = an N-acylglycine + CoA + H(+). The enzyme catalyses (9Z)-hexadecenoyl-CoA + glycine = N-(9Z-hexadecenoyl)-glycine + CoA + H(+). It carries out the reaction octadecanoyl-CoA + glycine = N-octadecanoylglycine + CoA + H(+). The catalysed reaction is (5Z,8Z,11Z,14Z)-eicosatetraenoyl-CoA + glycine = N-(5Z,8Z,11Z,14Z)-eicosatetraenoyl-glycine + CoA + H(+). It catalyses the reaction (9Z)-octadecenoyl-CoA + glycine = N-(9Z-octadecenoyl)glycine + CoA + H(+). The enzyme catalyses octanoyl-CoA + glycine = N-octanoylglycine + CoA + H(+). It carries out the reaction decanoyl-CoA + glycine = N-decanoylglycine + CoA + H(+). The catalysed reaction is tetradecanoyl-CoA + glycine = N-tetradecanoylglycine + CoA + H(+). It catalyses the reaction dodecanoyl-CoA + glycine = N-dodecanoylglycine + CoA + H(+). The enzyme catalyses (9Z,12Z)-octadecadienoyl-CoA + glycine = N-(9Z,12Z-octadecadienoyl)-glycine + CoA + H(+). It carries out the reaction a fatty acyl-CoA + glycine = an N-(fatty acyl)-glycine + CoA + H(+). In terms of biological role, mitochondrial acyltransferase which transfers the acyl group to the N-terminus of glycine. Conjugates numerous substrates, such as arachidonoyl-CoA and saturated medium and long-chain acyl-CoAs ranging from chain-length C8:0-CoA to C18:0-CoA, to form a variety of N-acylglycines. Shows a preference for monounsaturated fatty acid oleoyl-CoA (C18:1-CoA) as an acyl donor. Does not exhibit any activity toward C22:6-CoA and chenodeoxycholoyl-CoA, nor toward serine or alanine. This chain is Glycine N-acyltransferase-like protein 2, found in Homo sapiens (Human).